The primary structure comprises 430 residues: ETS domain-containing protein Elk-4 (430 aa).

Positions 5-85 form a DNA-binding region, ETS; that stretch reads ITLWQFLLQL…NGQKFVYKFV (81 aa). Basic and acidic residues predominate over residues 116-127; sequence SKDVEYGGKERP. The segment at 116–138 is disordered; it reads SKDVEYGGKERPPQPGAKTSSRN. Lys166 is covalently cross-linked (Glycyl lysine isopeptide (Lys-Gly) (interchain with G-Cter in SUMO2)). Disordered regions lie at residues 245–279 and 292–325; these read TTFNPTPPVPSTPLPLKEPPRTPSPPLSSNPDIDT and PENLSLEPKNEDSALPEKDKTNNSSRSKKPKGLE. Pro residues predominate over residues 249 to 272; the sequence is PTPPVPSTPLPLKEPPRTPSPPLS. Basic and acidic residues predominate over residues 299-312; it reads PKNEDSALPEKDKT.

This sequence belongs to the ETS family. In terms of assembly, interacts with SIRT7. Lung and liver.

The protein resides in the nucleus. In terms of biological role, involved in both transcriptional activation and repression. Interaction with SIRT7 leads to recruitment and stabilization of SIRT7 at promoters, followed by deacetylation of histone H3 at 'Lys-18' (H3K18Ac) and subsequent transcription repression. Forms a ternary complex with the serum response factor (SRF). Requires DNA-bound SRF for ternary complex formation and makes extensive DNA contacts to the 5'side of SRF, but does not bind DNA autonomously. The chain is ETS domain-containing protein Elk-4 (Elk4) from Mus musculus (Mouse).